The primary structure comprises 231 residues: Large ribosomal subunit protein uL1 (231 aa).

Belongs to the universal ribosomal protein uL1 family. As to quaternary structure, part of the 50S ribosomal subunit.

Binds directly to 23S rRNA. The L1 stalk is quite mobile in the ribosome, and is involved in E site tRNA release. Functionally, protein L1 is also a translational repressor protein, it controls the translation of the L11 operon by binding to its mRNA. In Thiobacillus denitrificans (strain ATCC 25259 / T1), this protein is Large ribosomal subunit protein uL1.